An 857-amino-acid polypeptide reads, in one-letter code: Bifunctional levopimaradiene synthase, chloroplastic (857 aa).

The transit peptide at 1-33 (MALPSSSLSSQIHTGATTQCIPHFHGSLNAGTS) directs the protein to the chloroplast. Lysine 257 is a substrate binding site. The Mg(2+) site is built by aspartate 390 and aspartate 392. The DXDD motif motif lies at 390-393 (DIDD). Lysine 477 contacts substrate. Mg(2+) contacts are provided by aspartate 609, aspartate 613, asparagine 753, threonine 757, and glutamate 761. The DDXXD motif motif lies at 609–613 (DDLYD).

This sequence belongs to the terpene synthase family. Tpsd subfamily. Requires Mg(2+) as cofactor.

Its subcellular location is the plastid. The protein resides in the chloroplast. It carries out the reaction (2E,6E,10E)-geranylgeranyl diphosphate = (+)-copalyl diphosphate. The catalysed reaction is (+)-copalyl diphosphate = abieta-7,13-diene + diphosphate. It catalyses the reaction (+)-copalyl diphosphate = abieta-8(14),12-diene + diphosphate. The enzyme catalyses (+)-copalyl diphosphate = neoabietadiene + diphosphate. It functions in the pathway terpene metabolism; oleoresin biosynthesis. Functionally, involved in defensive oleoresin formation in conifers in response to insect attack or other injury. Involved in diterpene (C20) olefins biosynthesis. Bifunctional enzyme that catalyzes two sequential cyclizations of geranylgeranyl diphosphate (GGPP) to levopimaradiene. Levopimaradiene is the major products of the enzyme with abietadiene and neoabietadiene. No activity with farnesyl diphosphate (FPP) as substrate. This Pinus contorta (Shore pine) protein is Bifunctional levopimaradiene synthase, chloroplastic.